Reading from the N-terminus, the 299-residue chain is Ribonuclease Z (299 aa).

The Zn(2+) site is built by histidine 60, histidine 62, aspartate 64, histidine 65, histidine 137, aspartate 207, and histidine 265. The Proton acceptor role is filled by aspartate 64.

Belongs to the RNase Z family. In terms of assembly, homodimer. Zn(2+) serves as cofactor.

The catalysed reaction is Endonucleolytic cleavage of RNA, removing extra 3' nucleotides from tRNA precursor, generating 3' termini of tRNAs. A 3'-hydroxy group is left at the tRNA terminus and a 5'-phosphoryl group is left at the trailer molecule.. In terms of biological role, zinc phosphodiesterase, which displays some tRNA 3'-processing endonuclease activity. Probably involved in tRNA maturation, by removing a 3'-trailer from precursor tRNA. The polypeptide is Ribonuclease Z (Nitrosopumilus maritimus (strain SCM1)).